A 295-amino-acid chain; its full sequence is 4-hydroxy-tetrahydrodipicolinate synthase (295 aa).

Threonine 45 contributes to the pyruvate binding site. The active-site Proton donor/acceptor is tyrosine 131. Residue lysine 159 is the Schiff-base intermediate with substrate of the active site. Valine 202 is a binding site for pyruvate.

It belongs to the DapA family. As to quaternary structure, homotetramer; dimer of dimers.

The protein resides in the cytoplasm. The enzyme catalyses L-aspartate 4-semialdehyde + pyruvate = (2S,4S)-4-hydroxy-2,3,4,5-tetrahydrodipicolinate + H2O + H(+). The protein operates within amino-acid biosynthesis; L-lysine biosynthesis via DAP pathway; (S)-tetrahydrodipicolinate from L-aspartate: step 3/4. In terms of biological role, catalyzes the condensation of (S)-aspartate-beta-semialdehyde [(S)-ASA] and pyruvate to 4-hydroxy-tetrahydrodipicolinate (HTPA). This is 4-hydroxy-tetrahydrodipicolinate synthase from Methanothrix thermoacetophila (strain DSM 6194 / JCM 14653 / NBRC 101360 / PT) (Methanosaeta thermophila).